The sequence spans 490 residues: Cobyric acid synthase (490 aa).

A GATase cobBQ-type domain is found at 250-432 (QLEIVVIRLP…LHGLLDNHAW (183 aa)). Catalysis depends on Cys328, which acts as the Nucleophile. Residue His424 is part of the active site.

The protein belongs to the CobB/CobQ family. CobQ subfamily.

The protein operates within cofactor biosynthesis; adenosylcobalamin biosynthesis. Its function is as follows. Catalyzes amidations at positions B, D, E, and G on adenosylcobyrinic A,C-diamide. NH(2) groups are provided by glutamine, and one molecule of ATP is hydrogenolyzed for each amidation. In Gloeobacter violaceus (strain ATCC 29082 / PCC 7421), this protein is Cobyric acid synthase.